Here is a 419-residue protein sequence, read N- to C-terminus: L-rhamnose isomerase (419 aa).

Mn(2+) contacts are provided by His-262, Asp-294, and Asp-296.

Belongs to the rhamnose isomerase family. Homotetramer. The cofactor is Mn(2+).

Its subcellular location is the cytoplasm. It carries out the reaction L-rhamnopyranose = L-rhamnulose. It participates in carbohydrate degradation; L-rhamnose degradation; glycerone phosphate from L-rhamnose: step 1/3. Functionally, catalyzes the interconversion of L-rhamnose and L-rhamnulose. The sequence is that of L-rhamnose isomerase from Salmonella paratyphi A (strain AKU_12601).